We begin with the raw amino-acid sequence, 301 residues long: Transmembrane protein 178A (301 aa).

The signal sequence occupies residues 1-25 (MEKRALVTAISLSMSLLALMLLVTA). The Extracellular segment spans residues 26-183 (IFTDHWYETD…LLHLRRITAG (158 aa)). The N-linked (GlcNAc...) asparagine glycan is linked to N162. Residues 184–204 (FLGMAAAVMLCGSIVAAVGFF) traverse the membrane as a helical segment. The Cytoplasmic segment spans residues 205–215 (WEESLTQHVSG). The helical transmembrane segment at 216 to 236 (LLFLMAGIFCTISLCTYAASV) threads the bilayer. Over 237-258 (SYDLSRNPPFIYGLPSDVDHGY) the chain is Extracellular. The chain crosses the membrane as a helical span at residues 259–279 (GWSIFCAWVSLGLTVASGCIC). Topologically, residues 280–301 (TTYPFLSRTKALRSKTARESSV) are cytoplasmic.

This sequence belongs to the TMEM178 family.

The protein resides in the endoplasmic reticulum membrane. May act as a negative regulator of osteoclast differentiation. In Danio rerio (Zebrafish), this protein is Transmembrane protein 178A (tmem178a).